The following is a 130-amino-acid chain: Small ribosomal subunit protein uS9 (130 aa).

It belongs to the universal ribosomal protein uS9 family.

In Clostridioides difficile (strain 630) (Peptoclostridium difficile), this protein is Small ribosomal subunit protein uS9.